The chain runs to 830 residues: FYN-binding protein 1 (830 aa).

The segment at 1 to 501 (MDGKTDVKSL…REKKEQELRK (501 aa)) is disordered. The residue at position 13 (Lys13) is an N6-acetyllysine. Polar residues predominate over residues 15-55 (NTGSNPTEEVSTSSRPFKVAGQNSPSGIQSKKNLFDNQGNA). Residues Ser38 and Ser56 each carry the phosphoserine modification. The span at 79 to 89 (TYEEKSEKEPK) shows a compositional bias: basic and acidic residues. Position 233 is a phosphoserine (Ser233). 2 stretches are compositionally biased toward basic and acidic residues: residues 248-259 (PAKEDPEDKDHG) and 284-296 (NSEE…KTDI). A Phosphoserine modification is found at Ser329. Residues 330-339 (QEKEGDKDSA) are compositionally biased toward basic and acidic residues. Pro residues-rich tracts occupy residues 344–362 (KPLP…PSRP) and 391–407 (LPPP…PLPA). The segment at 347–447 (PPLSVLGPPP…QDGVMHSDGT (101 aa)) is interaction with SKAP1. Acidic residues predominate over residues 450–464 (LEEEQESDGEMYEDI). The residue at position 456 (Ser456) is a Phosphoserine. Residues 461–464 (YEDI) carry the SH2-binding motif. The segment covering 465–500 (ESSKERDKKREKEEKKRLELERKEQKEREKKEQELR) has biased composition (basic and acidic residues). A coiled-coil region spans residues 465–502 (ESSKERDKKREKEEKKRLELERKEQKEREKKEQELRKK). The Nuclear localization signal signature appears at 479-486 (KKRLELER). One can recognise an SH3 1 domain in the interval 510–571 (QVIHHAKACC…KTTAVKIDYD (62 aa)). Tyr570 is modified (phosphotyrosine). Ser572 is subject to Phosphoserine. Residues 595–598 (YDDV) carry the SH2-binding; to LCP2 motif. Disordered regions lie at residues 601 to 646 (QDAP…DEKT) and 660 to 739 (KDER…EKEE). The segment covering 621–636 (ADDDIYDGIEEEDADD) has biased composition (acidic residues). The SH2-binding; to FYN signature appears at 626–629 (YDGI). Residues 660–675 (KDERKKSIREKPKVSE) are compositionally biased toward basic and acidic residues. The span at 693 to 703 (VGEEVYDDVDA) shows a compositional bias: acidic residues. Tyr698 is modified (phosphotyrosine). Positions 722-739 (TKAEEKDPKKLKKQEKEE) are enriched in basic and acidic residues. The short motif at 732–739 (LKKQEKEE) is the Nuclear localization signal element. The 69-residue stretch at 747 to 815 (KYDGEIRVLY…LRSYLVDNDG (69 aa)) folds into the SH3 2 domain.

Part of a complex consisting of SKAP2, FYB1 and PTPNS1. Part of a complex consisting of SKAP2, FYB1 and LILRB3. Part of a complex consisting of SKAP1, FYB1 and CLNK. Interacts with CLNK (via its SH2 domain) and FYN; this interaction allows SKAP1 and FYB1 to recruit FYN to the complex, thus promoting the phosphorylation of CLNK by FYN. Interacts with FYN. Interacts with LCP2. Interacts with SKAP1. Interacts with SKAP2. Interacts with FASLG. Interacts with EVL. Interacts with TMEM47. Interacts with LCK. T-cell receptor ligation leads to increased tyrosine phosphorylation.

Its subcellular location is the cytoplasm. The protein resides in the nucleus. The protein localises to the cell junction. Its function is as follows. Acts as an adapter protein of the FYN and LCP2 signaling cascades in T-cells. May play a role in linking T-cell signaling to remodeling of the actin cytoskeleton. Modulates the expression of IL2. Involved in platelet activation. Prevents the degradation of SKAP1 and SKAP2. May be involved in high affinity immunoglobulin epsilon receptor signaling in mast cells. This is FYN-binding protein 1 from Rattus norvegicus (Rat).